The chain runs to 182 residues: Large ribosomal subunit protein uL5 (182 aa).

This sequence belongs to the universal ribosomal protein uL5 family. As to quaternary structure, part of the 50S ribosomal subunit; part of the 5S rRNA/L5/L18/L25 subcomplex. Contacts the 5S rRNA and the P site tRNA. Forms a bridge to the 30S subunit in the 70S ribosome.

In terms of biological role, this is one of the proteins that bind and probably mediate the attachment of the 5S RNA into the large ribosomal subunit, where it forms part of the central protuberance. In the 70S ribosome it contacts protein S13 of the 30S subunit (bridge B1b), connecting the 2 subunits; this bridge is implicated in subunit movement. Contacts the P site tRNA; the 5S rRNA and some of its associated proteins might help stabilize positioning of ribosome-bound tRNAs. This is Large ribosomal subunit protein uL5 from Borrelia turicatae (strain 91E135).